The sequence spans 211 residues: Uracil phosphoribosyltransferase (211 aa).

5-phospho-alpha-D-ribose 1-diphosphate is bound by residues arginine 78, arginine 103, and 130–138; that span reads DPMLATGGT. Residues isoleucine 195 and 200 to 202 each bind uracil; that span reads GDA. Aspartate 201 provides a ligand contact to 5-phospho-alpha-D-ribose 1-diphosphate.

Belongs to the UPRTase family. It depends on Mg(2+) as a cofactor.

The enzyme catalyses UMP + diphosphate = 5-phospho-alpha-D-ribose 1-diphosphate + uracil. It participates in pyrimidine metabolism; UMP biosynthesis via salvage pathway; UMP from uracil: step 1/1. Allosterically activated by GTP. Its function is as follows. Catalyzes the conversion of uracil and 5-phospho-alpha-D-ribose 1-diphosphate (PRPP) to UMP and diphosphate. The sequence is that of Uracil phosphoribosyltransferase from Streptomyces avermitilis (strain ATCC 31267 / DSM 46492 / JCM 5070 / NBRC 14893 / NCIMB 12804 / NRRL 8165 / MA-4680).